Reading from the N-terminus, the 728-residue chain is Bacteriophytochrome (728 aa).

Cysteine 12 lines the a tetrapyrrole pocket. The chromophore binding domain stretch occupies residues 17–495 (IHVPGAIQPH…RLDLMELCLN (479 aa)). One can recognise a GAF domain in the interval 139-303 (DTASLLSNVT…IFSQVCSAIV (165 aa)). The region spanning 510-721 (VLGHDLRNPL…TFCLRLPVRQ (212 aa)) is the Histidine kinase domain. Histidine 513 bears the Phosphohistidine; by autocatalysis mark.

This sequence in the N-terminal section; belongs to the phytochrome family. In terms of processing, contains one covalently linked tetrapyrrole chromophore.

It carries out the reaction ATP + protein L-histidine = ADP + protein N-phospho-L-histidine.. Photoreceptor which exists in two forms that are reversibly interconvertible by light: the R form that absorbs maximally in the red region of the spectrum and the FR form that absorbs maximally in the far-red region. The protein is Bacteriophytochrome (bphP) of Pseudomonas aeruginosa (strain ATCC 15692 / DSM 22644 / CIP 104116 / JCM 14847 / LMG 12228 / 1C / PRS 101 / PAO1).